The following is a 179-amino-acid chain: Large ribosomal subunit protein uL5 (179 aa).

This sequence belongs to the universal ribosomal protein uL5 family. Part of the 50S ribosomal subunit; part of the 5S rRNA/L5/L18/L25 subcomplex. Contacts the 5S rRNA and the P site tRNA. Forms a bridge to the 30S subunit in the 70S ribosome.

In terms of biological role, this is one of the proteins that bind and probably mediate the attachment of the 5S RNA into the large ribosomal subunit, where it forms part of the central protuberance. In the 70S ribosome it contacts protein S13 of the 30S subunit (bridge B1b), connecting the 2 subunits; this bridge is implicated in subunit movement. Contacts the P site tRNA; the 5S rRNA and some of its associated proteins might help stabilize positioning of ribosome-bound tRNAs. The protein is Large ribosomal subunit protein uL5 of Buchnera aphidicola subsp. Baizongia pistaciae (strain Bp).